The primary structure comprises 585 residues: Regulator of gene activity (585 aa).

The segment covering 42 to 56 (FQTDFANSYPGTANY) has biased composition (polar residues). 3 disordered regions span residues 42-93 (FQTD…GNRN), 148-191 (GGGG…PGSK), and 349-394 (GVGG…KVTN). A compositionally biased stretch (low complexity) spans 58–71 (QAPQQQQQQQQQPQ). The span at 166 to 184 (PSLTNARGQNDQTLPQSNP) shows a compositional bias: polar residues. The span at 349–367 (GVGGGLGSGSGSSGSGAGG) shows a compositional bias: gly residues. Residues 372–388 (DNSSNDKLVKSGVQTSP) show a composition bias toward polar residues.

The protein belongs to the CNOT2/3/5 family. Component of the CCR4-NOT complex composed of at least Pop2/Caf1-55, Ccr4, Not1, Rga/Not2, and Not3. As to expression, expressed in heterogeneous levels between adjacent germline stem cells (at protein level).

It localises to the cytoplasm. Component of the CCR4-NOT complex which is one of the major cellular mRNA deadenylases and is linked to various cellular processes including bulk mRNA degradation, miRNA-mediated repression, translational repression during translational initiation and general transcription regulation. Additional complex functions may be a consequence of its influence on mRNA expression. Essential for viability. Acts as a suppressor of position effect variegation (PEV) at the white locus and regulates the expression of several unrelated genes. Plays a role in germline stem cell differentiation in the ovaries. The chain is Regulator of gene activity from Drosophila melanogaster (Fruit fly).